A 182-amino-acid polypeptide reads, in one-letter code: Ribosomal RNA small subunit methyltransferase G (182 aa).

S-adenosyl-L-methionine is bound by residues Gly-58, Phe-63, 109–110, and Arg-123; that span reads IE.

Belongs to the methyltransferase superfamily. RNA methyltransferase RsmG family.

It localises to the cytoplasm. It carries out the reaction guanosine(527) in 16S rRNA + S-adenosyl-L-methionine = N(7)-methylguanosine(527) in 16S rRNA + S-adenosyl-L-homocysteine. Specifically methylates the N7 position of guanine in position 527 of 16S rRNA. This Campylobacter fetus subsp. fetus (strain 82-40) protein is Ribosomal RNA small subunit methyltransferase G.